The sequence spans 77 residues: uncharacterized protein (77 aa).

This is an uncharacterized protein from Acidianus ambivalens (Desulfurolobus ambivalens).